A 1277-amino-acid chain; its full sequence is Membrane-associated guanylate kinase, WW and PDZ domain-containing protein 2 (1277 aa).

The PDZ domain occupies 17 to 101 (ESVIGRNPEG…PLRLKCVKQG (85 aa)). Residues 109–283 (RHYLNLRFQK…APVYSQPEEL (175 aa)) enclose the Guanylate kinase-like domain. The interval 205–308 (PGATPSAEGK…EDSDPLPDNW (104 aa)) is disordered. Positions 281 to 296 (EELKDQMDDTKSTKPE) are enriched in basic and acidic residues. WW domains follow at residues 302-335 (DPLPDNWEMAYTEKGEVYFIDHNTKTTSWLDPRL) and 348-381 (NELPYGWEKIDDPIYGTYYVDHINRRTQFENPVL). The interval 302 to 381 (DPLPDNWEMA…RRTQFENPVL (80 aa)) is interaction with DDN. A Phosphotyrosine modification is found at Tyr362. The PDZ 1 domain maps to 426–510 (STTLKKSNMG…SVNLVLCRGY (85 aa)). The segment at 556–575 (QSVPDITDRPPHSLHSMPAD) is disordered. The region spanning 605–683 (TLTIVKGAKG…ETSLIIHRGG (79 aa)) is the PDZ 2 domain. A Phosphoserine modification is found at Ser686. One can recognise a PDZ 3 domain in the interval 778–860 (DVHLRRMESG…NGQVNLTVRR (83 aa)). Tyr827 bears the Phosphotyrosine mark. The interval 869-913 (CPENGRSPGSVSTHHSSPRSDYATYANSNHAAPSNNASPPEGFAS) is disordered. A phosphoserine mark is found at Ser884 and Ser885. The segment covering 894–908 (ANSNHAAPSNNASPP) has biased composition (low complexity). A PDZ 4 domain is found at 920 to 1010 (DVIIHRKENE…SVTLRIIPQE (91 aa)). Polar residues predominate over residues 1011 to 1042 (ELNNPTSAPSSEKQSPMAQQHSPLAQQHSPLA). Positions 1011–1130 (ELNNPTSAPS…PDTRQYPLSD (120 aa)) are disordered. Positions 1069–1085 (NSYRSEVKARQDVKPDI) are enriched in basic and acidic residues. The region spanning 1141-1223 (TVDMEKGAKG…RVRLLLKRGT (83 aa)) is the PDZ 5 domain.

This sequence belongs to the MAGUK family. As to quaternary structure, interacts (via its WW domains) with DRPLA. Interacts with CTNNB1, ACVR2A, SMAD2 and SMAD3. Part of a complex consisting of MAGI2/ARIP1, ACVR2A, ACVR1B and SMAD3. May interact with HTR2A and IGSF9. Interacts with HTR4. Interacts (via guanylate kinase domain) with DLGAP1. Interacts (via PDZ domains) with GRIN2A, GRID2 and NLGN1. Interacts with CTNND2. Interacts with MAGUIN-1. Interacts (via its second PDZ domain) with PTEN (via unphosphorylated C-terminus); this interaction diminishes the degradation rate of PTEN. Found in a complex, at least composed of KIDINS220, MAGI2, NTRK1 and RAPGEF2; the complex is mainly formed at late endosomes in a NGF-dependent manner. Interacts with RAPGEF2; the interaction occurs before or after nerve growth factor (NGF) stimulation. Isoform 1 interacts (via PDZ domain) with KIDINS220 isoform 2 (via C-terminal domain). Interacts with DDN. Identified in a complex with ACTN4, CASK, IQGAP1, NPHS1, SPTAN1 and SPTBN1. Interacts with DLL1. Found in a complex with IGSF9B and NLGN2; the interaction with IGSF9B is mediated via the PDZ 5 and PDZ 6 domains, while the interaction with NLGN2 is mediated via the WW1, WW2 and PDZ2 domains. Interacts (via PDZ 6 domain) with USH1G (via SAM domain); the interaction is triggered by phosphorylation of USH1G by CK2 and negatively regulates MAGI2-mediated endocytosis. Expressed in the foot process layer of podocytes of the kidney glomeruli but not in tubules (at protein level). Expressed in the brain.

It localises to the cytoplasm. Its subcellular location is the late endosome. The protein resides in the synapse. The protein localises to the synaptosome. It is found in the cell membrane. It localises to the cytoskeleton. Its subcellular location is the microtubule organizing center. The protein resides in the centrosome. The protein localises to the cell projection. It is found in the cilium. It localises to the centriole. Its subcellular location is the photoreceptor inner segment. The protein resides in the photoreceptor outer segment. Functionally, seems to act as scaffold molecule at synaptic junctions by assembling neurotransmitter receptors and cell adhesion proteins. Plays a role in nerve growth factor (NGF)-induced recruitment of RAPGEF2 to late endosomes and neurite outgrowth. May play a role in regulating activin-mediated signaling in neuronal cells. Enhances the ability of PTEN to suppress AKT1 activation. Plays a role in receptor-mediated clathrin-dependent endocytosis which is required for ciliogenesis. The polypeptide is Membrane-associated guanylate kinase, WW and PDZ domain-containing protein 2 (Magi2) (Rattus norvegicus (Rat)).